Reading from the N-terminus, the 227-residue chain is Protein rapunzel (227 aa).

Residues 179 to 196 (LAYLFCIGFIALMGYYGI) form a helical membrane-spanning segment.

The protein resides in the membrane. The polypeptide is Protein rapunzel (Danio rerio (Zebrafish)).